The primary structure comprises 33 residues: Photosystem II reaction center protein Psb30 (33 aa).

The helical transmembrane segment at 5–25 (LITQLASLILIVASGPIVIGL) threads the bilayer.

Belongs to the Psb30/Ycf12 family. In terms of assembly, PSII is composed of 1 copy each of membrane proteins PsbA, PsbB, PsbC, PsbD, PsbE, PsbF, PsbH, PsbI, PsbJ, PsbK, PsbL, PsbM, PsbT, PsbX, PsbY, PsbZ, Psb30/Ycf12, peripheral proteins of the oxygen-evolving complex and a large number of cofactors. It forms dimeric complexes.

It localises to the plastid. It is found in the chloroplast thylakoid membrane. A core subunit of photosystem II (PSII), probably helps stabilize the reaction center. The polypeptide is Photosystem II reaction center protein Psb30 (Lepocinclis buetschlii).